A 338-amino-acid chain; its full sequence is Glycerol-3-phosphate dehydrogenase [NAD(P)+] (338 aa).

Residues W11, R30, and K109 each coordinate NADPH. Sn-glycerol 3-phosphate contacts are provided by K109, G143, and S145. Residue A147 coordinates NADPH. Sn-glycerol 3-phosphate is bound by residues K198, D251, S261, R262, and N263. Residue K198 is the Proton acceptor of the active site. R262 is a binding site for NADPH. V286 and E288 together coordinate NADPH.

Belongs to the NAD-dependent glycerol-3-phosphate dehydrogenase family.

It is found in the cytoplasm. The enzyme catalyses sn-glycerol 3-phosphate + NAD(+) = dihydroxyacetone phosphate + NADH + H(+). It carries out the reaction sn-glycerol 3-phosphate + NADP(+) = dihydroxyacetone phosphate + NADPH + H(+). Its pathway is membrane lipid metabolism; glycerophospholipid metabolism. Catalyzes the reduction of the glycolytic intermediate dihydroxyacetone phosphate (DHAP) to sn-glycerol 3-phosphate (G3P), the key precursor for phospholipid synthesis. The sequence is that of Glycerol-3-phosphate dehydrogenase [NAD(P)+] from Cupriavidus taiwanensis (strain DSM 17343 / BCRC 17206 / CCUG 44338 / CIP 107171 / LMG 19424 / R1) (Ralstonia taiwanensis (strain LMG 19424)).